A 434-amino-acid chain; its full sequence is Methylenetetrahydrofolate--tRNA-(uracil-5-)-methyltransferase TrmFO (434 aa).

10–15 is an FAD binding site; that stretch reads GAGLAG.

Belongs to the MnmG family. TrmFO subfamily. Requires FAD as cofactor.

The protein resides in the cytoplasm. The enzyme catalyses uridine(54) in tRNA + (6R)-5,10-methylene-5,6,7,8-tetrahydrofolate + NADH + H(+) = 5-methyluridine(54) in tRNA + (6S)-5,6,7,8-tetrahydrofolate + NAD(+). The catalysed reaction is uridine(54) in tRNA + (6R)-5,10-methylene-5,6,7,8-tetrahydrofolate + NADPH + H(+) = 5-methyluridine(54) in tRNA + (6S)-5,6,7,8-tetrahydrofolate + NADP(+). Catalyzes the folate-dependent formation of 5-methyl-uridine at position 54 (M-5-U54) in all tRNAs. This is Methylenetetrahydrofolate--tRNA-(uracil-5-)-methyltransferase TrmFO from Bacillus mycoides (strain KBAB4) (Bacillus weihenstephanensis).